The following is a 105-amino-acid chain: UPF0148 protein PYRAB12700 (105 aa).

The protein belongs to the UPF0148 family.

This chain is UPF0148 protein PYRAB12700, found in Pyrococcus abyssi (strain GE5 / Orsay).